The chain runs to 311 residues: Syntaxin-111 (311 aa).

At 1-284 (MNDLMTKSFM…AREHQRSSRK (284 aa)) the chain is on the cytoplasmic side. The region spanning 213-275 (VHEIQDRHDA…QGGNKELRKA (63 aa)) is the t-SNARE coiled-coil homology domain. The chain crosses the membrane as a helical; Anchor for type IV membrane protein span at residues 285-305 (WLCIGIIILLLLVLLVIVPIA). Over 306–311 (TSFKRS) the chain is Vesicular.

The protein belongs to the syntaxin family. Expressed in roots and panicles.

The protein localises to the cell membrane. It is found in the cytoplasm. Vesicle trafficking protein that functions in the secretory pathway. The chain is Syntaxin-111 from Oryza sativa subsp. japonica (Rice).